The following is a 163-amino-acid chain: General stress protein 16O (163 aa).

Basic and acidic residues predominate over residues 19-30 (QKELSGEKKETE). Disordered stretches follow at residues 19–55 (QKEL…TLVT) and 115–163 (ADVE…QDSK). The segment at 89-123 (CEKTGQEIPYERLEAVPYARMTVEAQADVEDDLET) adopts a dksA C4-type; degenerate zinc-finger fold. Residues 127-146 (SYEREFHEQVKDLSNKETID) are compositionally biased toward basic and acidic residues.

This chain is General stress protein 16O (yocK), found in Bacillus subtilis (strain 168).